The following is a 420-amino-acid chain: Glutamyl-tRNA reductase (420 aa).

Substrate is bound by residues Thr49 to Arg52, Ser107, Glu112 to Gln114, and Gln118. The active-site Nucleophile is the Cys50. Position 187 to 192 (Gly187 to Ile192) interacts with NADP(+).

Belongs to the glutamyl-tRNA reductase family. As to quaternary structure, homodimer.

It catalyses the reaction (S)-4-amino-5-oxopentanoate + tRNA(Glu) + NADP(+) = L-glutamyl-tRNA(Glu) + NADPH + H(+). The protein operates within porphyrin-containing compound metabolism; protoporphyrin-IX biosynthesis; 5-aminolevulinate from L-glutamyl-tRNA(Glu): step 1/2. Catalyzes the NADPH-dependent reduction of glutamyl-tRNA(Glu) to glutamate 1-semialdehyde (GSA). The chain is Glutamyl-tRNA reductase from Nitrosococcus oceani (strain ATCC 19707 / BCRC 17464 / JCM 30415 / NCIMB 11848 / C-107).